The chain runs to 359 residues: Peptide chain release factor 1 (359 aa).

The residue at position 236 (Gln236) is an N5-methylglutamine.

It belongs to the prokaryotic/mitochondrial release factor family. In terms of processing, methylated by PrmC. Methylation increases the termination efficiency of RF1.

The protein localises to the cytoplasm. In terms of biological role, peptide chain release factor 1 directs the termination of translation in response to the peptide chain termination codons UAG and UAA. This is Peptide chain release factor 1 from Malacoplasma penetrans (strain HF-2) (Mycoplasma penetrans).